The chain runs to 268 residues: Tryptophan synthase alpha chain (268 aa).

Catalysis depends on proton acceptor residues Glu49 and Asp60.

The protein belongs to the TrpA family. As to quaternary structure, tetramer of two alpha and two beta chains.

The enzyme catalyses (1S,2R)-1-C-(indol-3-yl)glycerol 3-phosphate + L-serine = D-glyceraldehyde 3-phosphate + L-tryptophan + H2O. It functions in the pathway amino-acid biosynthesis; L-tryptophan biosynthesis; L-tryptophan from chorismate: step 5/5. The alpha subunit is responsible for the aldol cleavage of indoleglycerol phosphate to indole and glyceraldehyde 3-phosphate. The sequence is that of Tryptophan synthase alpha chain from Yersinia pseudotuberculosis serotype O:3 (strain YPIII).